A 397-amino-acid chain; its full sequence is Formate-dependent phosphoribosylglycinamide formyltransferase (397 aa).

N(1)-(5-phospho-beta-D-ribosyl)glycinamide is bound by residues 21–22 (EL) and Glu-81. ATP is bound by residues Arg-113, Lys-154, 194–197 (EEFV), and Glu-202. The region spanning 118–312 (RFAAEKLKLP…EFQIHVRSAI (195 aa)) is the ATP-grasp domain. Mg(2+) contacts are provided by Glu-271 and Glu-283. Residues Asp-290, Lys-361, and 368 to 369 (RR) each bind N(1)-(5-phospho-beta-D-ribosyl)glycinamide.

The protein belongs to the PurK/PurT family. Homodimer.

The enzyme catalyses N(1)-(5-phospho-beta-D-ribosyl)glycinamide + formate + ATP = N(2)-formyl-N(1)-(5-phospho-beta-D-ribosyl)glycinamide + ADP + phosphate + H(+). It participates in purine metabolism; IMP biosynthesis via de novo pathway; N(2)-formyl-N(1)-(5-phospho-D-ribosyl)glycinamide from N(1)-(5-phospho-D-ribosyl)glycinamide (formate route): step 1/1. Involved in the de novo purine biosynthesis. Catalyzes the transfer of formate to 5-phospho-ribosyl-glycinamide (GAR), producing 5-phospho-ribosyl-N-formylglycinamide (FGAR). Formate is provided by PurU via hydrolysis of 10-formyl-tetrahydrofolate. This chain is Formate-dependent phosphoribosylglycinamide formyltransferase, found in Saccharolobus solfataricus (strain ATCC 35092 / DSM 1617 / JCM 11322 / P2) (Sulfolobus solfataricus).